The sequence spans 178 residues: Gamma-crystallin S (178 aa).

Serine 2 is subject to N-acetylserine. Residues 2–5 (SKSV) are N-terminal arm. 2 consecutive Beta/gamma crystallin 'Greek key' domains span residues 6-44 (AKITFYDDKNFQGHHYECDSDCPDFHTYLSCCNSIRVTG) and 45-87 (GAWV…KVIH). Residues 88–93 (LSSGGQ) are connecting peptide. 2 Beta/gamma crystallin 'Greek key' domains span residues 94–134 (YKLQ…KVLD) and 135–177 (GVWV…RRIM).

Belongs to the beta/gamma-crystallin family. Monomer.

In terms of biological role, crystallins are the dominant structural components of the vertebrate eye lens. The chain is Gamma-crystallin S (CRYGS) from Macropus fuliginosus (Western gray kangaroo).